The primary structure comprises 120 residues: Large ribosomal subunit protein bL19 (120 aa).

This sequence belongs to the bacterial ribosomal protein bL19 family.

This protein is located at the 30S-50S ribosomal subunit interface and may play a role in the structure and function of the aminoacyl-tRNA binding site. This chain is Large ribosomal subunit protein bL19, found in Crocosphaera subtropica (strain ATCC 51142 / BH68) (Cyanothece sp. (strain ATCC 51142)).